Here is a 686-residue protein sequence, read N- to C-terminus: Proprotein convertase subtilisin/kexin type 9 (686 aa).

Positions 1-28 (MGTVSSRRLWWPLPLLLLLLLGPAGTRA) are cleaved as a signal peptide. Positions 29-150 (QEDDDDDYEE…IEEDSSVFAQ (122 aa)) are excised as a propeptide. Y36 is modified (sulfotyrosine). Residue S45 is modified to Phosphoserine. In terms of domain architecture, Inhibitor I9 spans 75–147 (TYVVVLKEET…VDYIEEDSSV (73 aa)). Residues 153-459 (PWNLERITPA…GWQLFCRTVW (307 aa)) enclose the Peptidase S8 domain. Catalysis depends on charge relay system residues D184 and H224. 2 disulfides stabilise this stretch: C221/C253 and C321/C356. The active-site Charge relay system is S384. The segment at 448-686 (GEGWQLFCRT…CRSQHLAQAS (239 aa)) is C-terminal domain. 3 cysteine pairs are disulfide-bonded: C455-C525, C475-C524, and C484-C507. N-linked (GlcNAc...) asparagine glycosylation occurs at N531. Cystine bridges form between C532-C599, C550-C598, C560-C586, C606-C677, C624-C676, and C633-C652. The residue at position 686 (S686) is a Phosphoserine.

This sequence belongs to the peptidase S8 family. Monomer. Can self-associate to form dimers and higher multimers which may have increased LDLR degrading activity. The precursor protein but not the mature protein may form multimers. Interacts with APOB, VLDLR, LRP8/APOER2 and BACE1. The full-length immature form (pro-PCSK9) interacts with SCNN1A, SCNN1B and SCNN1G. The pro-PCSK9 form (via C-terminal domain) interacts with LDLR. Interacts (via the C-terminal domain) with ANXA2 (via repeat Annexin 1); the interaction inhibits the degradation of LDLR. Requires Ca(2+) as cofactor. Cleavage by furin and PCSK5 generates a truncated inactive protein that is unable to induce LDLR degradation. In terms of processing, undergoes autocatalytic cleavage in the endoplasmic reticulum to release the propeptide from the N-terminus and the cleavage of the propeptide is strictly required for its maturation and activation. The cleaved propeptide however remains associated with the catalytic domain through non-covalent interactions, preventing potential substrates from accessing its active site. As a result, it is secreted from cells as a propeptide-containing, enzymatically inactive protein. Post-translationally, phosphorylation protects the propeptide against proteolysis.

It localises to the cytoplasm. Its subcellular location is the secreted. The protein localises to the endosome. It is found in the lysosome. The protein resides in the cell surface. It localises to the endoplasmic reticulum. Its subcellular location is the golgi apparatus. Its proteolytic activity is autoinhibited by the non-covalent binding of the propeptide to the catalytic domain. Inhibited by EGTA. In terms of biological role, crucial player in the regulation of plasma cholesterol homeostasis. Binds to low-density lipid receptor family members: low density lipoprotein receptor (LDLR), very low density lipoprotein receptor (VLDLR), apolipoprotein E receptor (LRP1/APOER) and apolipoprotein receptor 2 (LRP8/APOER2), and promotes their degradation in intracellular acidic compartments. Acts via a non-proteolytic mechanism to enhance the degradation of the hepatic LDLR through a clathrin LDLRAP1/ARH-mediated pathway. May prevent the recycling of LDLR from endosomes to the cell surface or direct it to lysosomes for degradation. Can induce ubiquitination of LDLR leading to its subsequent degradation. Inhibits intracellular degradation of APOB via the autophagosome/lysosome pathway in a LDLR-independent manner. Involved in the disposal of non-acetylated intermediates of BACE1 in the early secretory pathway. Inhibits epithelial Na(+) channel (ENaC)-mediated Na(+) absorption by reducing ENaC surface expression primarily by increasing its proteasomal degradation. Regulates neuronal apoptosis via modulation of LRP8/APOER2 levels and related anti-apoptotic signaling pathways. The chain is Proprotein convertase subtilisin/kexin type 9 (PCSK9) from Saguinus labiatus (Red-chested mustached tamarin).